An 81-amino-acid chain; its full sequence is ARGDAEKWESLISEERACKGEGVKGCYDKPDDWCCKKTPCKCPAWSHERECRCTQPCARRCRGKRALMLDPETHRLLFSED.

A propeptide spanning residues 1–16 is cleaved from the precursor; that stretch reads ARGDAEKWESLISEER. 4 disulfide bridges follow: C18–C35, C26–C40, C34–C53, and C42–C51. Arginine amide is present on R62. The propeptide occupies 66–81; the sequence is ALMLDPETHRLLFSED.

Belongs to the neurotoxin 28 (Litx) family. In terms of tissue distribution, expressed by the venom gland.

The protein localises to the secreted. Its function is as follows. Toxin active against insects (S.frugiperda larvae). May act on sodium (Nav) or calcium (Cav) channels. This is U1-sicaritoxin-Li1c from Loxosceles intermedia (Brown spider).